Reading from the N-terminus, the 70-residue chain is Large ribosomal subunit protein eL38 (70 aa).

The protein belongs to the eukaryotic ribosomal protein eL38 family.

The protein is Large ribosomal subunit protein eL38 (RpL38) of Anopheles gambiae (African malaria mosquito).